We begin with the raw amino-acid sequence, 312 residues long: Homoserine O-acetyltransferase (312 aa).

Residue Cys-142 is the Acyl-thioester intermediate of the active site. Lys-163 and Ser-192 together coordinate substrate. His-235 acts as the Proton acceptor in catalysis. Glu-237 is an active-site residue. Residue Arg-249 participates in substrate binding.

This sequence belongs to the MetA family.

It localises to the cytoplasm. It carries out the reaction L-homoserine + acetyl-CoA = O-acetyl-L-homoserine + CoA. It functions in the pathway amino-acid biosynthesis; L-methionine biosynthesis via de novo pathway; O-acetyl-L-homoserine from L-homoserine: step 1/1. In terms of biological role, transfers an acetyl group from acetyl-CoA to L-homoserine, forming acetyl-L-homoserine. This is Homoserine O-acetyltransferase from Chelativorans sp. (strain BNC1).